The primary structure comprises 281 residues: MNIVNTIKDVRLIIKKWKDENLSIGYVPTMGYLHEGHTSLIKKAREENDKVIVSIFVNPIQFGPKEDYSTYPRDLVKDSSLCEKFGVDLIFNPETSEMYPNKIYSHINVDILTENLCGEKRPGHFQGVCTVLTKFFNILNPTKAYLGEKDAQQLAVVKKMVEDLNFPIEIIGCPIIREEDGLAKSSRNAYLNKQERKSALILNKSLKEALKALESGEKNLNNIKDIIVSKLNKEPLAKIDYVSIVDSITLQSVEKIQSSILVAIAVYIGKTRLIDNFTFKL.

Residue 30-37 (MGYLHEGH) participates in ATP binding. Residue His-37 is the Proton donor of the active site. Gln-61 serves as a coordination point for (R)-pantoate. Gln-61 serves as a coordination point for beta-alanine. 147–150 (GEKD) provides a ligand contact to ATP. Residue Gln-153 participates in (R)-pantoate binding. Residues Ile-176 and 184 to 187 (KSSR) contribute to the ATP site.

The protein belongs to the pantothenate synthetase family. In terms of assembly, homodimer.

The protein resides in the cytoplasm. The catalysed reaction is (R)-pantoate + beta-alanine + ATP = (R)-pantothenate + AMP + diphosphate + H(+). It functions in the pathway cofactor biosynthesis; (R)-pantothenate biosynthesis; (R)-pantothenate from (R)-pantoate and beta-alanine: step 1/1. Functionally, catalyzes the condensation of pantoate with beta-alanine in an ATP-dependent reaction via a pantoyl-adenylate intermediate. The chain is Pantothenate synthetase from Clostridium botulinum (strain ATCC 19397 / Type A).